Reading from the N-terminus, the 335-residue chain is BTB and MATH domain-containing protein 39 (335 aa).

In terms of domain architecture, MATH spans 14–141; that stretch reads MKTLCFKIMN…NGVFTIEFDL (128 aa). The 66-residue stretch at 161 to 226 folds into the BTB domain; the sequence is ADGKLIVEDQ…LQLDEFKVNV (66 aa).

This Caenorhabditis briggsae protein is BTB and MATH domain-containing protein 39.